We begin with the raw amino-acid sequence, 561 residues long: Efflux pump bfoC (561 aa).

Positions 1 to 55 (MSDTARILGGPSASSSRDGGMELNSFTEVSQTNSRSHSTKEEEGQVDDQQRPARE) are disordered. The segment covering 24–36 (NSFTEVSQTNSRS) has biased composition (polar residues). Residues 38–55 (STKEEEGQVDDQQRPARE) are compositionally biased toward basic and acidic residues. Helical transmembrane passes span 59-79 (GVLGGYKLVLVTIGLCFCIFC), 103-123 (DVGWYASAYLLTTCAVTLTFG), 128-148 (FFPIKWVYLSALLIFELGSFI), 164-184 (VAGLGGGGLLSGSLLIISQCV), 194-214 (GFIMSIFAVASVIAPLMGGAF), 222-242 (WCFYINLPFGLVSAVVILFTF), 257-277 (AVGLDPLGTATFLPGIVCLLL), 293-313 (VVALFVLFGVLLVCFIGLQLW), 335-355 (LYGFCLNGAMFTFVYYLPIWF), 378-398 (VVFAIISGVLVSMTGYLGPFM), 425-445 (IGYQVLLGLSIGVGFQVPIFV), 457-477 (TATALMTFIQLLGGAIFVSVA), and 530-550 (VHTFYLAIGLAAASFLAATVI).

The protein belongs to the major facilitator superfamily. TCR/Tet family.

The protein localises to the cell membrane. Its function is as follows. Efflux pump; part of the gene cluster that mediates the biosynthesis of bifonsecin B, a dimeric gamma-naphthopyrone. The chain is Efflux pump bfoC from Aspergillus brasiliensis (strain CBS 101740 / IMI 381727 / IBT 21946).